Consider the following 143-residue polypeptide: Ninjurin-2 (143 aa).

Residues 1–61 (MESDRETIHL…KSVLQQGPFA (61 aa)) are Extracellular-facing. Positions 26–38 (NFYATKKSVAESM) are helix alpha1. A helix alpha2 region spans residues 39 to 58 (LDVALFMSNAMRLKSVLQQG). Residues 62 to 93 (EYYTTLVTLIIVSLLLQVVISLLLVFIAILNL) form a helical membrane-spanning segment. Residues 94–97 (NEVE) are Cytoplasmic-facing. A helical transmembrane segment spans residues 98–127 (NQRHLNKLNNAATILVFITVVINIFITAFG). Lys-104 is a binding site for cholesterol. The Extracellular portion of the chain corresponds to 128–143 (AHHAASMAARTSSNPI).

The protein belongs to the ninjurin family. As to quaternary structure, homooligomer; in response to stimuli, homooligomerizes into filaments. In contrast to NINJ1, the filament is curved toward the intracellular space, preventing its circularization on a relatively flat membrane to mediate plasma membrane rupture: curvature is caused by cholesterol-binding at the cytoplasmic leaflet.

The protein localises to the cell membrane. Its role in unclear. In contrast to NINJ1 paralog, does not mediate plasma membrane rupture (cytolysis) downstream of necroptotic and pyroptotic programmed cell death. While it is able to oligomerize and form filaments, filaments are curved toward the intracellular space, preventing circularization to mediate plasma membrane rupture. May act as a homophilic transmembrane adhesion molecule involved in nerve regeneration. Promotes axonal growth. The chain is Ninjurin-2 (Ninj2) from Mus musculus (Mouse).